The following is a 207-amino-acid chain: CASP-like protein 1D1 (207 aa).

Residues Met-1 to Asn-40 lie on the Cytoplasmic side of the membrane. A helical transmembrane segment spans residues Leu-41–Ala-61. The Extracellular portion of the chain corresponds to Lys-62–Pro-89. The helical transmembrane segment at Ala-90–Ile-110 threads the bilayer. Residues Ser-111–Lys-124 lie on the Cytoplasmic side of the membrane. Residues Thr-125 to Gly-145 traverse the membrane as a helical segment. At Thr-146 to His-176 the chain is on the extracellular side. The helical transmembrane segment at Ile-177–Leu-197 threads the bilayer. The Cytoplasmic segment spans residues Asn-198 to Arg-207.

It belongs to the Casparian strip membrane proteins (CASP) family. As to quaternary structure, homodimer and heterodimers.

The protein resides in the cell membrane. In Oryza sativa subsp. japonica (Rice), this protein is CASP-like protein 1D1.